The sequence spans 255 residues: Thiazole synthase (255 aa).

K96 (schiff-base intermediate with DXP) is an active-site residue. 1-deoxy-D-xylulose 5-phosphate is bound by residues G157, 183 to 184 (AG), and 205 to 206 (NT).

It belongs to the ThiG family. As to quaternary structure, homotetramer. Forms heterodimers with either ThiH or ThiS.

It localises to the cytoplasm. It catalyses the reaction [ThiS sulfur-carrier protein]-C-terminal-Gly-aminoethanethioate + 2-iminoacetate + 1-deoxy-D-xylulose 5-phosphate = [ThiS sulfur-carrier protein]-C-terminal Gly-Gly + 2-[(2R,5Z)-2-carboxy-4-methylthiazol-5(2H)-ylidene]ethyl phosphate + 2 H2O + H(+). It participates in cofactor biosynthesis; thiamine diphosphate biosynthesis. Its function is as follows. Catalyzes the rearrangement of 1-deoxy-D-xylulose 5-phosphate (DXP) to produce the thiazole phosphate moiety of thiamine. Sulfur is provided by the thiocarboxylate moiety of the carrier protein ThiS. In vitro, sulfur can be provided by H(2)S. This is Thiazole synthase from Staphylococcus haemolyticus (strain JCSC1435).